The sequence spans 396 residues: Chorismate synthase (396 aa).

NADP(+) contacts are provided by Arg41 and Arg47. Residues 130–132 (RAS), Gly298, 313–317 (KPIPT), and Arg339 contribute to the FMN site.

Belongs to the chorismate synthase family. Homotetramer. The cofactor is FMNH2.

The catalysed reaction is 5-O-(1-carboxyvinyl)-3-phosphoshikimate = chorismate + phosphate. Its pathway is metabolic intermediate biosynthesis; chorismate biosynthesis; chorismate from D-erythrose 4-phosphate and phosphoenolpyruvate: step 7/7. Its function is as follows. Catalyzes the anti-1,4-elimination of the C-3 phosphate and the C-6 proR hydrogen from 5-enolpyruvylshikimate-3-phosphate (EPSP) to yield chorismate, which is the branch point compound that serves as the starting substrate for the three terminal pathways of aromatic amino acid biosynthesis. This reaction introduces a second double bond into the aromatic ring system. This Syntrophomonas wolfei subsp. wolfei (strain DSM 2245B / Goettingen) protein is Chorismate synthase.